The primary structure comprises 163 residues: Large ribosomal subunit protein uL15 (163 aa).

It belongs to the universal ribosomal protein uL15 family. As to quaternary structure, part of the 50S ribosomal subunit.

In terms of biological role, binds to the 23S rRNA. The polypeptide is Large ribosomal subunit protein uL15 (Orientia tsutsugamushi (strain Ikeda) (Rickettsia tsutsugamushi)).